A 696-amino-acid chain; its full sequence is DNA topoisomerase 6 subunit B (696 aa).

The segment at 1–36 is disordered; the sequence is MDDDAGDGAASGGTKRKVTAASSSAAAKGKAAGKGK. Positions 20–36 are enriched in low complexity; the sequence is AASSSAAAKGKAAGKGK. Residues Asn88, Asp187, 208 to 209, 217 to 224, and Lys543 each bind ATP; these read TK and GKFGLGAK.

The protein belongs to the TOP6B family. As to quaternary structure, homodimer. Heterotetramer of two TOP6A and two TOP6B subunits. Interacts with SPO11-4.

It is found in the nucleus. The catalysed reaction is ATP-dependent breakage, passage and rejoining of double-stranded DNA.. In terms of biological role, component of the DNA topoisomerase VI involved in chromatin organization and progression of endoreduplication cycles. Relaxes both positive and negative superturns and exhibits a strong decatenase activity. The B subunit binds ATP. This Oryza sativa subsp. japonica (Rice) protein is DNA topoisomerase 6 subunit B (TOP6B).